The following is a 395-amino-acid chain: Protein SGT1 (395 aa).

A Glycyl lysine isopeptide (Lys-Gly) (interchain with G-Cter in ubiquitin) cross-link involves residue Lys-32. The tract at residues 137–175 (KKNKKQKDSTNKHTIKPVESIENRGDNNSSHSPISPLKI) is disordered. Phosphoserine occurs at positions 168 and 171. One can recognise a CS domain in the interval 182-277 (SPKFKIDWYQ…IDSTQWKKLE (96 aa)). Residues 312–395 (SYPSSSKKKI…PPEGMEPKHW (84 aa)) enclose the SGS domain. Residues 373-395 (DWEDVSKGTVKTSPPEGMEPKHW) form a disordered region.

Belongs to the SGT1 family. Interacts with SKP1/CBF3D. Part of SCF E3 ubiquitin ligase complexes containing SKP1, CDC53, HRT1 and some F-box proteins. Interacts with CIR1/CDC35.

Involved in ubiquitination and subsequent proteasomal degradation of target proteins. Required for both entry into S phase and kinetochore function. Also involved in cyclic AMP (cAMP) pathway, possibly by participating in the assembly or the conformational activation of specific multiprotein complexes. The protein is Protein SGT1 of Saccharomyces cerevisiae (strain ATCC 204508 / S288c) (Baker's yeast).